Here is a 101-residue protein sequence, read N- to C-terminus: Interleukin-8 (101 aa).

An N-terminal signal peptide occupies residues 1-22 (MTSKLVVALLAAFMLSAALCEA). Arginine 27 carries the citrulline modification. Cystine bridges form between cysteine 34-cysteine 61 and cysteine 36-cysteine 77.

The protein belongs to the intercrine alpha (chemokine CxC) family. Homodimer. Interacts with TNFAIP6 (via Link domain); this interaction interferes with chemokine binding to glycosaminoglycans. In terms of processing, citrullination at Arg-27 prevents proteolysis, and dampens tissue inflammation, it also enhances leukocytosis, possibly through impaired chemokine clearance from the blood circulation.

It localises to the secreted. Functionally, chemotactic factor that mediates inflammatory response by attracting neutrophils, basophils, and T-cells to clear pathogens and protect the host from infection. Also plays an important role in neutrophil activation. Released in response to an inflammatory stimulus, exerts its effect by binding to the G-protein-coupled receptors CXCR1 and CXCR2, primarily found in neutrophils, monocytes and endothelial cells. G-protein heterotrimer (alpha, beta, gamma subunits) constitutively binds to CXCR1/CXCR2 receptor and activation by IL8 leads to beta and gamma subunits release from Galpha (GNAI2 in neutrophils) and activation of several downstream signaling pathways including PI3K and MAPK pathways. The protein is Interleukin-8 (CXCL8) of Felis catus (Cat).